A 323-amino-acid chain; its full sequence is Di/tripeptide transport ATP-binding protein DppF (323 aa).

One can recognise an ABC transporter domain in the interval 5–254; that stretch reads LTARDLTRHY…PLHPYTRALL (250 aa). 47–54 serves as a coordination point for ATP; it reads GESGCGKS.

Belongs to the ABC transporter superfamily. In terms of assembly, the complex is composed of two ATP-binding proteins (DppD and DppF), two transmembrane proteins (DppB and DppC) and a solute-binding protein (DppA1-A5). Five orthologous SBPs (DppA1-A5) are present in P.aeruginosa, which increases the substrate specificity of the DppBCDF transporter.

It localises to the cell inner membrane. The enzyme catalyses a dipeptide(out) + ATP + H2O = a dipeptide(in) + ADP + phosphate + H(+). Part of the ABC transporter DppABCDF involved in the uptake of various di/tripeptides. Is also involved in the uptake of phaseolotoxin, a toxic tripeptide inhibiting the enzyme ornithine carbamoyltransferase. Responsible for energy coupling to the transport system. This is Di/tripeptide transport ATP-binding protein DppF from Pseudomonas aeruginosa (strain UCBPP-PA14).